The chain runs to 250 residues: Cruxrhodopsin-1 (250 aa).

The Extracellular segment spans residues M1 to I9. Residues W10 to A27 form a helical membrane-spanning segment. The Cytoplasmic portion of the chain corresponds to R28 to Y41. The helical transmembrane segment at I42–L60 threads the bilayer. Residues G61–Y77 are Extracellular-facing. Residues W78–D94 traverse the membrane as a helical segment. Residues L95–T105 are Cytoplasmic-facing. Residues I106–L125 traverse the membrane as a helical segment. Residues S126–R138 lie on the Extracellular side of the membrane. The chain crosses the membrane as a helical span at residues L139–S158. The Cytoplasmic portion of the chain corresponds to S159–K176. The helical transmembrane segment at T177 to I195 threads the bilayer. Topologically, residues G196 to I207 are extracellular. The helical transmembrane segment at E208–L227 threads the bilayer. The residue at position 220 (K220) is an N6-(retinylidene)lysine. Residues L228–D250 lie on the Cytoplasmic side of the membrane.

The protein belongs to the archaeal/bacterial/fungal opsin family. In terms of assembly, homotrimer.

The protein resides in the cell membrane. In terms of biological role, light-driven proton pump. This Haloarcula argentinensis protein is Cruxrhodopsin-1 (cop1).